The chain runs to 57 residues: DNA-directed RNA polymerase subunit Rpo6 (57 aa).

The protein belongs to the archaeal Rpo6/eukaryotic RPB6 RNA polymerase subunit family. Part of the RNA polymerase complex.

The protein resides in the cytoplasm. It catalyses the reaction RNA(n) + a ribonucleoside 5'-triphosphate = RNA(n+1) + diphosphate. Functionally, DNA-dependent RNA polymerase (RNAP) catalyzes the transcription of DNA into RNA using the four ribonucleoside triphosphates as substrates. This Pyrococcus furiosus (strain ATCC 43587 / DSM 3638 / JCM 8422 / Vc1) protein is DNA-directed RNA polymerase subunit Rpo6.